The chain runs to 432 residues: Trigger factor (432 aa).

The PPIase FKBP-type domain maps to 165-250 (GDFAKIDFEG…LKEIQVKAPQ (86 aa)).

It belongs to the FKBP-type PPIase family. Tig subfamily.

The protein resides in the cytoplasm. The catalysed reaction is [protein]-peptidylproline (omega=180) = [protein]-peptidylproline (omega=0). In terms of biological role, involved in protein export. Acts as a chaperone by maintaining the newly synthesized protein in an open conformation. Functions as a peptidyl-prolyl cis-trans isomerase. In Wolinella succinogenes (strain ATCC 29543 / DSM 1740 / CCUG 13145 / JCM 31913 / LMG 7466 / NCTC 11488 / FDC 602W) (Vibrio succinogenes), this protein is Trigger factor.